Reading from the N-terminus, the 172-residue chain is 3-hydroxydecanoyl-[acyl-carrier-protein] dehydratase (172 aa).

H71 is a catalytic residue.

This sequence belongs to the thioester dehydratase family. FabA subfamily. As to quaternary structure, homodimer.

It localises to the cytoplasm. The enzyme catalyses a (3R)-hydroxyacyl-[ACP] = a (2E)-enoyl-[ACP] + H2O. It catalyses the reaction (3R)-hydroxydecanoyl-[ACP] = (2E)-decenoyl-[ACP] + H2O. The catalysed reaction is (2E)-decenoyl-[ACP] = (3Z)-decenoyl-[ACP]. It participates in lipid metabolism; fatty acid biosynthesis. Functionally, necessary for the introduction of cis unsaturation into fatty acids. Catalyzes the dehydration of (3R)-3-hydroxydecanoyl-ACP to E-(2)-decenoyl-ACP and then its isomerization to Z-(3)-decenoyl-ACP. Can catalyze the dehydratase reaction for beta-hydroxyacyl-ACPs with saturated chain lengths up to 16:0, being most active on intermediate chain length. In Serratia proteamaculans (strain 568), this protein is 3-hydroxydecanoyl-[acyl-carrier-protein] dehydratase.